The sequence spans 495 residues: Thioredoxin reductase SEP1 (495 aa).

37–54 is an FAD binding site; it reads DFVKPSPPGTTWGLGGTC. Cys-54 and Cys-59 are disulfide-bonded. The Proton acceptor role is filled by His-468. A cross-link (cysteinyl-selenocysteine (Cys-Sec)) is located at residues 493–494; sequence CU. Residue Sec-494 is a non-standard amino acid, selenocysteine.

This sequence belongs to the class-I pyridine nucleotide-disulfide oxidoreductase family. As to quaternary structure, homodimer. It depends on FAD as a cofactor. The N-terminus is blocked.

It carries out the reaction [thioredoxin]-dithiol + NADP(+) = [thioredoxin]-disulfide + NADPH + H(+). Activity was very low in selenium-depleted cells, but increased 4-fold to the same level as in selenium-sufficient cells for 70 hours after the addition of 10 nm selenite. The protein is Thioredoxin reductase SEP1 (SEP1) of Emiliania huxleyi (Coccolithophore).